The sequence spans 239 residues: Ribosomal RNA small subunit methyltransferase G (239 aa).

S-adenosyl-L-methionine is bound by residues G78, F83, 129 to 130 (AE), and R148.

The protein belongs to the methyltransferase superfamily. RNA methyltransferase RsmG family.

The protein resides in the cytoplasm. Specifically methylates the N7 position of a guanine in 16S rRNA. The polypeptide is Ribosomal RNA small subunit methyltransferase G (Desulfitobacterium hafniense (strain Y51)).